We begin with the raw amino-acid sequence, 226 residues long: Lipoprotein-releasing system ATP-binding protein LolD (226 aa).

In terms of domain architecture, ABC transporter spans 5-226 (LRCEKISKFY…MADGVLREAS (222 aa)). An ATP-binding site is contributed by 41–48 (GSSGSGKS).

This sequence belongs to the ABC transporter superfamily. Lipoprotein translocase (TC 3.A.1.125) family. In terms of assembly, the complex is composed of two ATP-binding proteins (LolD) and two transmembrane proteins (LolC and LolE).

The protein resides in the cell inner membrane. In terms of biological role, part of the ABC transporter complex LolCDE involved in the translocation of mature outer membrane-directed lipoproteins, from the inner membrane to the periplasmic chaperone, LolA. Responsible for the formation of the LolA-lipoprotein complex in an ATP-dependent manner. The protein is Lipoprotein-releasing system ATP-binding protein LolD of Haemophilus ducreyi (strain 35000HP / ATCC 700724).